The following is a 484-amino-acid chain: 3-isopropylmalate dehydratase large subunit (484 aa).

The [4Fe-4S] cluster site is built by C352, C412, and C415. Residues 462 to 484 (GTLSSPSDLDPAPESAAVSSSAA) are disordered.

This sequence belongs to the aconitase/IPM isomerase family. LeuC type 1 subfamily. Heterodimer of LeuC and LeuD. [4Fe-4S] cluster serves as cofactor.

The catalysed reaction is (2R,3S)-3-isopropylmalate = (2S)-2-isopropylmalate. It functions in the pathway amino-acid biosynthesis; L-leucine biosynthesis; L-leucine from 3-methyl-2-oxobutanoate: step 2/4. Its function is as follows. Catalyzes the isomerization between 2-isopropylmalate and 3-isopropylmalate, via the formation of 2-isopropylmaleate. The sequence is that of 3-isopropylmalate dehydratase large subunit from Arthrobacter sp. (strain FB24).